The sequence spans 318 residues: HPr kinase/phosphorylase (318 aa).

Catalysis depends on residues His-146 and Lys-167. Residue 161–168 participates in ATP binding; it reads GESGLGKS. Residue Ser-168 participates in Mg(2+) binding. The Proton acceptor; for phosphorylation activity. Proton donor; for dephosphorylation activity role is filled by Asp-185. Residues 209–218 are important for the catalytic mechanism of both phosphorylation and dephosphorylation; sequence LEVRGIGLLD. Glu-210 is a Mg(2+) binding site. Arg-252 is an active-site residue. An important for the catalytic mechanism of dephosphorylation region spans residues 273–278; sequence QVVAGR.

Belongs to the HPrK/P family. Homohexamer. Mg(2+) is required as a cofactor.

The catalysed reaction is [HPr protein]-L-serine + ATP = [HPr protein]-O-phospho-L-serine + ADP + H(+). It carries out the reaction [HPr protein]-O-phospho-L-serine + phosphate + H(+) = [HPr protein]-L-serine + diphosphate. Functionally, catalyzes the ATP- as well as the pyrophosphate-dependent phosphorylation of a specific serine residue in HPr, a phosphocarrier protein of the phosphoenolpyruvate-dependent sugar phosphotransferase system (PTS). HprK/P also catalyzes the pyrophosphate-producing, inorganic phosphate-dependent dephosphorylation (phosphorolysis) of seryl-phosphorylated HPr (P-Ser-HPr). This chain is HPr kinase/phosphorylase, found in Acidovorax sp. (strain JS42).